A 1002-amino-acid chain; its full sequence is Mitogen-activated protein kinase kinase kinase 21 (1002 aa).

The disordered stretch occupies residues 1–26 (MALPVAEGTADTPLSPARDDSGSTSS). The region spanning 24 to 88 (TSSGMWAALY…PASYVAPCGP (65 aa)) is the SH3 domain. In terms of domain architecture, Protein kinase spans 110-390 (LELKELIGAG…QLTAIEEAVL (281 aa)). ATP-binding positions include 116–124 (IGAGGFGQV) and K137. D247 serves as the catalytic Proton acceptor. T283 carries the phosphothreonine; by autocatalysis modification. Residue S287 is modified to Phosphoserine; by autocatalysis and MAP4K1. Leucine-zipper stretches follow at residues 409–430 (IQQM…EEEL) and 444–466 (LRRR…LNVL). Disordered regions lie at residues 508–531 (TVQA…PPGS), 574–604 (GCTW…NSPW), 640–689 (HRKP…VGAP), 721–778 (AQAP…SHSS), 797–823 (LGNA…SGCE), and 878–899 (QSAP…RDLA). Phosphoserine is present on residues S512, S527, and S531. T576 carries the phosphothreonine modification. Over residues 584–596 (TKERPEGRERVRP) the composition is skewed to basic and acidic residues. S598 carries the phosphoserine modification. A compositionally biased stretch (basic and acidic residues) spans 661 to 677 (DSQREDSSEAESREEGS). 2 stretches are compositionally biased toward low complexity: residues 740 to 758 (QPAS…QPSA) and 766 to 778 (STLL…SHSS).

The protein belongs to the protein kinase superfamily. STE Ser/Thr protein kinase family. MAP kinase kinase kinase subfamily. Homodimer. Interacts with TLR4. The cofactor is Mg(2+). Autophosphorylation on serine and threonine residues within the activation loop plays a role in enzyme activation.

The enzyme catalyses L-seryl-[protein] + ATP = O-phospho-L-seryl-[protein] + ADP + H(+). The catalysed reaction is L-threonyl-[protein] + ATP = O-phospho-L-threonyl-[protein] + ADP + H(+). Homodimerization via the leucine zipper domains is required for autophosphorylation and subsequent activation. Functionally, negative regulator of TLR4 signaling. Does not activate JNK1/MAPK8 pathway, p38/MAPK14, nor ERK2/MAPK1 pathways. This is Mitogen-activated protein kinase kinase kinase 21 (Map3k21) from Mus musculus (Mouse).